We begin with the raw amino-acid sequence, 157 residues long: 6,7-dimethyl-8-ribityllumazine synthase (157 aa).

5-amino-6-(D-ribitylamino)uracil-binding positions include Phe-25, 59–61, and 83–85; these read AME and AII. Residue 88-89 participates in (2S)-2-hydroxy-3-oxobutyl phosphate binding; it reads ST. Catalysis depends on His-91, which acts as the Proton donor. Residue Phe-116 participates in 5-amino-6-(D-ribitylamino)uracil binding. Arg-130 is a binding site for (2S)-2-hydroxy-3-oxobutyl phosphate.

This sequence belongs to the DMRL synthase family.

It catalyses the reaction (2S)-2-hydroxy-3-oxobutyl phosphate + 5-amino-6-(D-ribitylamino)uracil = 6,7-dimethyl-8-(1-D-ribityl)lumazine + phosphate + 2 H2O + H(+). Its pathway is cofactor biosynthesis; riboflavin biosynthesis; riboflavin from 2-hydroxy-3-oxobutyl phosphate and 5-amino-6-(D-ribitylamino)uracil: step 1/2. In terms of biological role, catalyzes the formation of 6,7-dimethyl-8-ribityllumazine by condensation of 5-amino-6-(D-ribitylamino)uracil with 3,4-dihydroxy-2-butanone 4-phosphate. This is the penultimate step in the biosynthesis of riboflavin. The protein is 6,7-dimethyl-8-ribityllumazine synthase of Lawsonia intracellularis (strain PHE/MN1-00).